We begin with the raw amino-acid sequence, 206 residues long: Small ribosomal subunit protein uS4 (206 aa).

Positions 1–16 (MTKRQESKYKIDRRMG) are enriched in basic and acidic residues. A disordered region spans residues 1–46 (MTKRQESKYKIDRRMGENIWGRPKSPVNRREYGPGQHGQRRKGKLS). In terms of domain architecture, S4 RNA-binding spans 94 to 154 (RRLDAVVYRA…EKSKQLAIVL (61 aa)).

The protein belongs to the universal ribosomal protein uS4 family. In terms of assembly, part of the 30S ribosomal subunit. Contacts protein S5. The interaction surface between S4 and S5 is involved in control of translational fidelity.

One of the primary rRNA binding proteins, it binds directly to 16S rRNA where it nucleates assembly of the body of the 30S subunit. In terms of biological role, with S5 and S12 plays an important role in translational accuracy. This Parvibaculum lavamentivorans (strain DS-1 / DSM 13023 / NCIMB 13966) protein is Small ribosomal subunit protein uS4.